We begin with the raw amino-acid sequence, 254 residues long: MRILVTNDDGIHAPGLATLEEIARELSDDVWVVAPESDQSGVSHSLSLNDPLRLRQVSEQRFAVKGTPSDCVILGVRHILGDHGPDLVLSGVNRGQNVAEDVTYSGTIAAAMEGTILGIRSIALSQAYGAGGRGALKWDCARTHGAKVVRKILETGIEPGILVNVNFPDCEPADVQGVAVAAQGFRNQALLSIDARVDGRGNPYFWLAFAKARFEPGHGSDLKAIAEKRISVTPLRLDLTDEPTLTRFAQAFAE.

Residues Asp-8, Asp-9, Ser-40, and Asn-93 each coordinate a divalent metal cation.

The protein belongs to the SurE nucleotidase family. Requires a divalent metal cation as cofactor.

It localises to the cytoplasm. The catalysed reaction is a ribonucleoside 5'-phosphate + H2O = a ribonucleoside + phosphate. Nucleotidase that shows phosphatase activity on nucleoside 5'-monophosphates. This Methylobacterium radiotolerans (strain ATCC 27329 / DSM 1819 / JCM 2831 / NBRC 15690 / NCIMB 10815 / 0-1) protein is 5'-nucleotidase SurE.